We begin with the raw amino-acid sequence, 347 residues long: Phosphoribosylformylglycinamidine cyclo-ligase (347 aa).

The protein belongs to the AIR synthase family.

The protein resides in the cytoplasm. The catalysed reaction is 2-formamido-N(1)-(5-O-phospho-beta-D-ribosyl)acetamidine + ATP = 5-amino-1-(5-phospho-beta-D-ribosyl)imidazole + ADP + phosphate + H(+). It functions in the pathway purine metabolism; IMP biosynthesis via de novo pathway; 5-amino-1-(5-phospho-D-ribosyl)imidazole from N(2)-formyl-N(1)-(5-phospho-D-ribosyl)glycinamide: step 2/2. This is Phosphoribosylformylglycinamidine cyclo-ligase from Prochlorococcus marinus (strain MIT 9301).